The chain runs to 370 residues: Chaperone protein DnaJ (370 aa).

The J domain maps to 4-68 (DYYQVLGVSK…QKRAAYDRFG (65 aa)). The segment at 133–211 (GIEKNISFSS…CHGMGRYHKQ (79 aa)) adopts a CR-type zinc-finger fold. 8 residues coordinate Zn(2+): Cys146, Cys149, Cys163, Cys166, Cys185, Cys188, Cys199, and Cys202. CXXCXGXG motif repeat units lie at residues 146 to 153 (CDTCHGTG), 163 to 170 (CDACGGVG), 185 to 192 (CHKCQGNG), and 199 to 206 (CKKCHGMG).

The protein belongs to the DnaJ family. As to quaternary structure, homodimer. The cofactor is Zn(2+).

It is found in the cytoplasm. Functionally, participates actively in the response to hyperosmotic and heat shock by preventing the aggregation of stress-denatured proteins and by disaggregating proteins, also in an autonomous, DnaK-independent fashion. Unfolded proteins bind initially to DnaJ; upon interaction with the DnaJ-bound protein, DnaK hydrolyzes its bound ATP, resulting in the formation of a stable complex. GrpE releases ADP from DnaK; ATP binding to DnaK triggers the release of the substrate protein, thus completing the reaction cycle. Several rounds of ATP-dependent interactions between DnaJ, DnaK and GrpE are required for fully efficient folding. Also involved, together with DnaK and GrpE, in the DNA replication of plasmids through activation of initiation proteins. This chain is Chaperone protein DnaJ, found in Rickettsia prowazekii (strain Madrid E).